The following is a 75-amino-acid chain: Sec-independent protein translocase protein TatA (75 aa).

A helical membrane pass occupies residues Met-1–Gly-21. The segment at Met-43–Val-75 is disordered.

The protein belongs to the TatA/E family. As to quaternary structure, the Tat system comprises two distinct complexes: a TatABC complex, containing multiple copies of TatA, TatB and TatC subunits, and a separate TatA complex, containing only TatA subunits. Substrates initially bind to the TatABC complex, which probably triggers association of the separate TatA complex to form the active translocon.

The protein localises to the cell inner membrane. In terms of biological role, part of the twin-arginine translocation (Tat) system that transports large folded proteins containing a characteristic twin-arginine motif in their signal peptide across membranes. TatA could form the protein-conducting channel of the Tat system. The chain is Sec-independent protein translocase protein TatA from Azorhizobium caulinodans (strain ATCC 43989 / DSM 5975 / JCM 20966 / LMG 6465 / NBRC 14845 / NCIMB 13405 / ORS 571).